Reading from the N-terminus, the 38-residue chain is DNA binding protein ORF8 (38 aa).

It belongs to the microviridae J protein family.

It localises to the virion. The protein localises to the host cytoplasm. Functionally, mediates ssDNA packaging into virion, it locates to the internal surface of the capsid, thereby displacing the internal scaffolding protein during virion formation. Additionally, protein ORF8 plays a role in viral attachment to the host cell. The chain is DNA binding protein ORF8 from Spiroplasma melliferum (SpV4).